We begin with the raw amino-acid sequence, 527 residues long: ATP-dependent RNA helicase DBP3 (527 aa).

The span at 1–11 (MSKDHKDKKRK) shows a compositional bias: basic residues. The segment at 1 to 89 (MSKDHKDKKR…TGYSQSPALT (89 aa)) is disordered. Positions 12–24 (HSDEATEEVEKKT) are enriched in basic and acidic residues. The segment covering 25 to 44 (KVSKKEKKDKKEKKEKKDKK) has biased composition (basic residues). The segment covering 45-71 (EKKDKSEKKDKSEKKEKKEKKESEDVP) has biased composition (basic and acidic residues). Over residues 72 to 89 (TKSSAVVSTGYSQSPALT) the composition is skewed to polar residues. The Q motif motif lies at 119-145 (LGFDQIDLDSRIASVISKFPTPTPIQA). One can recognise a Helicase ATP-binding domain in the interval 148–319 (WPYLLSGKDV…STFMNSPVKV (172 aa)). 161–168 (AETGSGKT) contributes to the ATP binding site. The short motif at 266-269 (DEAD) is the DEAD box element. In terms of domain architecture, Helicase C-terminal spans 348 to 497 (KLLSLLRKYQ…PVPDELLKFG (150 aa)).

The protein belongs to the DEAD box helicase family. DDX5/DBP2 subfamily.

It localises to the nucleus. The protein resides in the nucleolus. It carries out the reaction ATP + H2O = ADP + phosphate + H(+). Its function is as follows. ATP-dependent RNA helicase required for 60S ribosomal subunit synthesis. Involved in efficient pre-rRNA processing, predominantly at site A3, which is necessary for the normal formation of 25S and 5.8S rRNAs. The polypeptide is ATP-dependent RNA helicase DBP3 (DBP3) (Debaryomyces hansenii (strain ATCC 36239 / CBS 767 / BCRC 21394 / JCM 1990 / NBRC 0083 / IGC 2968) (Yeast)).